The chain runs to 79 residues: MAIKLKIKKGDTVKIIAGDDKGKTGEVLAVLPKEKKVIVKDCKVAKKTVKPDQEKNPEGGFVNKEMPIDISNVAKVEGE.

Belongs to the universal ribosomal protein uL24 family. As to quaternary structure, part of the 50S ribosomal subunit.

Functionally, one of two assembly initiator proteins, it binds directly to the 5'-end of the 23S rRNA, where it nucleates assembly of the 50S subunit. One of the proteins that surrounds the polypeptide exit tunnel on the outside of the subunit. In Aliarcobacter butzleri (strain RM4018) (Arcobacter butzleri), this protein is Large ribosomal subunit protein uL24.